We begin with the raw amino-acid sequence, 84 residues long: Dolichol phosphate-mannose biosynthesis regulatory protein (84 aa).

A run of 2 helical transmembrane segments spans residues 11 to 31 (FGLV…VILL) and 49 to 69 (YAVL…GLFI).

This sequence belongs to the DPM2 family. Component of the dolichol-phosphate mannose (DPM) synthase complex composed of DPM1, DPM2 and DPM3; in the complex interacts directly with DPM3. Component of the glycosylphosphatidylinositol-N-acetylglucosaminyltransferase (GPI-GnT) complex composed at least by PIGA, PIGC, PIGH, PIGP, PIGQ, PIGY and DPM2. Interacts with PIGA, PIGC and PIGQ.

It localises to the endoplasmic reticulum membrane. The protein operates within protein modification; protein glycosylation. In terms of biological role, regulates the biosynthesis of dolichol phosphate-mannose. Regulatory subunit of the dolichol-phosphate mannose (DPM) synthase complex; essential for the ER localization and stable expression of DPM1. Part of the glycosylphosphatidylinositol-N-acetylglucosaminyltransferase (GPI-GnT) complex that catalyzes the transfer of N-acetylglucosamine from UDP-N-acetylglucosamine to phosphatidylinositol and participates in the first step of GPI biosynthesis. May act by regulating the GPI-GNT complex. The polypeptide is Dolichol phosphate-mannose biosynthesis regulatory protein (Cricetulus griseus (Chinese hamster)).